A 305-amino-acid polypeptide reads, in one-letter code: Ribonuclease Z (305 aa).

7 residues coordinate Zn(2+): H63, H65, D67, H68, H142, D209, and H267. The Proton acceptor role is filled by D67.

Belongs to the RNase Z family. Homodimer. Zn(2+) is required as a cofactor.

It catalyses the reaction Endonucleolytic cleavage of RNA, removing extra 3' nucleotides from tRNA precursor, generating 3' termini of tRNAs. A 3'-hydroxy group is left at the tRNA terminus and a 5'-phosphoryl group is left at the trailer molecule.. Functionally, zinc phosphodiesterase, which displays some tRNA 3'-processing endonuclease activity. Probably involved in tRNA maturation, by removing a 3'-trailer from precursor tRNA. The sequence is that of Ribonuclease Z from Nocardia farcinica (strain IFM 10152).